The sequence spans 380 residues: Alpha-N-acetylneuraminate alpha-2,8-sialyltransferase ST8SIA3 (380 aa).

At 1–9 the chain is on the cytoplasmic side; the sequence is MRNCKMARV. Residues 10–33 traverse the membrane as a helical; Signal-anchor for type II membrane protein segment; the sequence is ASVLGLVMLSVALLILSLISYVSL. The Lumenal portion of the chain corresponds to 34–380; that stretch reads KKENIFTTPK…LTKLTLSHCA (347 aa). N-linked (GlcNAc...) asparagine glycans are attached at residues N93, N113, and N160. 2 cysteine pairs are disulfide-bonded: C162–C313 and C176–C379. CMP-N-acetyl-beta-neuraminate contacts are provided by N167 and N190. N-linked (GlcNAc...) asparagine glycosylation occurs at N206. CMP-N-acetyl-beta-neuraminate contacts are provided by S300, T301, G302, W322, Y336, and H337. H354 acts as the Proton donor/acceptor in catalysis.

Belongs to the glycosyltransferase 29 family. Homodimer. Post-translationally, autopolysialylated. As to expression, expressed in fetal and adult brain and fetal liver.

It is found in the golgi apparatus membrane. It carries out the reaction [N-acetyl-alpha-D-neuraminosyl-(2-&gt;8)](n) + CMP-N-acetyl-beta-neuraminate = [N-acetyl-alpha-D-neuraminosyl-(2-&gt;8)](n+1) + CMP + H(+). The catalysed reaction is alpha-Neu5Ac-(2-&gt;3)-beta-D-Gal-(1-&gt;4)-6S-D-GlcNAc + CMP-N-acetyl-beta-neuraminate = alpha-Neu5Ac-(2-&gt;8)-alpha-Neu5Ac-(2-&gt;3)-beta-D-Gal-(1-&gt;4)-6S-D-GlcNAc + CMP + H(+). It catalyses the reaction a ganglioside GM3 (d18:1(4E)) + CMP-N-acetyl-beta-neuraminate = a ganglioside GD3 (d18:1(4E)) + CMP + H(+). The enzyme catalyses a ganglioside GM3 + CMP-N-acetyl-beta-neuraminate = a ganglioside GD3 + CMP + H(+). It carries out the reaction an N-acetyl-alpha-neuraminyl-(2-&gt;3)-beta-D-galactosyl derivative + CMP-N-acetyl-beta-neuraminate = an N-acetyl-alpha-neuraminyl-(2-&gt;8)-N-acetyl-alpha-neuraminyl-(2-&gt;3)-beta-D-galactosyl derivative + CMP + H(+). The catalysed reaction is an N-acetyl-alpha-neuraminyl-(2-&gt;3)-beta-D-galactosyl-(1-&gt;4)-N-acetyl-beta-D-glucosaminyl derivative + CMP-N-acetyl-beta-neuraminate = an alpha-Neu5Ac-(2-&gt;8)-alpha-Neu5Ac-(2-&gt;3)-beta-D-Gal-(1-&gt;4)-beta-D-GlcNAc derivative + CMP + H(+). It functions in the pathway protein modification; protein glycosylation. In terms of biological role, catalyzes the transfer of sialic acid from a CMP-linked sialic acid donor onto a terminal alpha-2,3-, alpha-2,6-, or alpha-2,8-linked sialic acid of an acceptor, such as N-linked oligosaccharides of glycoproteins and glycolipids through alpha-2,8-linkages. Forms oligosialic and polysialic acid on various sialylated N-acetyllactosamine oligosaccharides of glycoproteins, including FETUB N-glycans, a2-HS-glycoprotein (AHSG) and alpha 2,3-sialylated glycosphingolipids, such as alpha 2,3-sialylparagloboside and ganglioside GM3 and to a lesser extent NCAM1 N-glycans. However, it is much more specific to N-linked oligosaccharides of glycoproteins than glycosphingolipids. 2,3-sialylparagloboside serves as the best acceptor substrate among the glycolipids. alpha-Neu5Ac-(2-&gt;8)-alpha-Neu5Ac-(2-&gt;3)-beta-D-Gal-(1-&gt;4)-6S-D-GlcNAc and monosialyl and disialyl N-acetyllactosamines are the best acceptor substrates among glycoproteins. May plays critical role in the striatum by mediating the formation of disialylated and trisialylated terminal glycotopes on N- and O-glycans of specific striatal proteins, regulating their distribution in lipid rafts, affecting their interaction with other binding partners, and subsequently modulating striatal functions. The chain is Alpha-N-acetylneuraminate alpha-2,8-sialyltransferase ST8SIA3 from Homo sapiens (Human).